A 44-amino-acid polypeptide reads, in one-letter code: Defensin heliomicin (44 aa).

Cystine bridges form between Cys7/Cys32, Cys18/Cys40, and Cys22/Cys42.

The protein localises to the secreted. Its function is as follows. This peptide has potent anti-fungal activity. Has no activity against Gram-negative and Gram-positive bacteria. This chain is Defensin heliomicin, found in Heliothis virescens (Tobacco budworm moth).